Here is a 396-residue protein sequence, read N- to C-terminus: Phosphopentomutase (396 aa).

Mn(2+) is bound by residues D13, D288, H293, D329, H330, and H341.

The protein belongs to the phosphopentomutase family. The cofactor is Mn(2+).

It localises to the cytoplasm. The enzyme catalyses 2-deoxy-alpha-D-ribose 1-phosphate = 2-deoxy-D-ribose 5-phosphate. The catalysed reaction is alpha-D-ribose 1-phosphate = D-ribose 5-phosphate. The protein operates within carbohydrate degradation; 2-deoxy-D-ribose 1-phosphate degradation; D-glyceraldehyde 3-phosphate and acetaldehyde from 2-deoxy-alpha-D-ribose 1-phosphate: step 1/2. In terms of biological role, isomerase that catalyzes the conversion of deoxy-ribose 1-phosphate (dRib-1-P) and ribose 1-phosphate (Rib-1-P) to deoxy-ribose 5-phosphate (dRib-5-P) and ribose 5-phosphate (Rib-5-P), respectively. The chain is Phosphopentomutase from Clostridium perfringens (strain ATCC 13124 / DSM 756 / JCM 1290 / NCIMB 6125 / NCTC 8237 / Type A).